The following is a 647-amino-acid chain: MSYITIIVISSDRPTPIHLSGIHSSCEVQSYTSVRSTVSVHHQEVEARPDCQIKSQYSDVVPIIANSLAEDNCNLMHDRIAYQLSELCASKRLDECITKLADLVPRHIDLLSAMPTLANLNPSFQRVHELLMDYSGQIMHVQQTISNLANPSKHVDFNTAVEILKSRMVERENAIERIQAIESVPLSHRVMEGTARHDLMKYKHADFRVTLPFSAPTSDWSSTEELRSDVHLVSDVNTCRNTDYGVIYKANPTHVEHVIWMSRQPLQIVDKSMTDTYFDEYLGAFRIICGDNVFHLHRHVAYNQNSQVIGVVLEGSPYLLRAIFRDLPRTLMTSFVFLTAVTPLPDQLLSFPYGGYIHTIVDSTAPLSHPLHPLTPSAETVCFYFSQLCHMGREHILSGEEIECVLPSGEVSTALYRLLTLINLDDSKRYVMTKRPYNVPNPVRHTIDVFLHDHGFHDVADALSEIGYMYATQKISCLLPTAITDIEGISPLAQVLLSLRVRCKNGVTKFGHTRLGQMSGLCKHGTPRNITQMMFISDDQTTEFFCPACGTVYETAFERQLCNVIDYMCVYNVPFDDGIFVMSPYYALNPKKSDPSTLKIVSSNIGYGAYPGIAMLGECYDAAIPPDFDTKTLSFARFRRATGGMML.

This is an uncharacterized protein from Cryphonectria parasitica mycoreovirus 1 (strain 9B21) (CpMYRV-1).